Consider the following 304-residue polypeptide: Dihydroorotate dehydrogenase B (NAD(+)), catalytic subunit (304 aa).

FMN-binding positions include serine 21 and 45–46; that span reads KA. Substrate-binding positions include lysine 45 and 69-73; that span reads NAIGL. Positions 99 and 127 each coordinate FMN. Asparagine 127 provides a ligand contact to substrate. The active-site Nucleophile is the cysteine 130. Positions 165 and 191 each coordinate FMN. 192-193 is a substrate binding site; that stretch reads NT. Residues glycine 217, 243 to 244, and 265 to 266 each bind FMN; these read GG and GT.

The protein belongs to the dihydroorotate dehydrogenase family. Type 1 subfamily. In terms of assembly, heterotetramer of 2 PyrK and 2 PyrD type B subunits. The cofactor is FMN.

It localises to the cytoplasm. It catalyses the reaction (S)-dihydroorotate + NAD(+) = orotate + NADH + H(+). The protein operates within pyrimidine metabolism; UMP biosynthesis via de novo pathway; orotate from (S)-dihydroorotate (NAD(+) route): step 1/1. In terms of biological role, catalyzes the conversion of dihydroorotate to orotate with NAD(+) as electron acceptor. In Shouchella clausii (strain KSM-K16) (Alkalihalobacillus clausii), this protein is Dihydroorotate dehydrogenase B (NAD(+)), catalytic subunit (pyrD).